The sequence spans 564 residues: CTP synthase (564 aa).

The tract at residues 1-265 is amidoligase domain; it reads MTKFVFVTGG…DEIVCHRLGI (265 aa). Ser-13 is a CTP binding site. Ser-13 is a binding site for UTP. ATP contacts are provided by residues 14 to 19 and Asp-71; that span reads SLGKGI. Residues Asp-71 and Glu-139 each contribute to the Mg(2+) site. CTP contacts are provided by residues 146-148, 186-191, and Lys-222; these read DIE and KTKPTQ. Residues 186-191 and Lys-222 each bind UTP; that span reads KTKPTQ. In terms of domain architecture, Glutamine amidotransferase type-1 spans 290–543; that stretch reads SIALVGKYVD…VRAAISFADK (254 aa). L-glutamine is bound at residue Gly-351. The Nucleophile; for glutamine hydrolysis role is filled by Cys-378. L-glutamine contacts are provided by residues 379–382, Glu-402, and Arg-469; that span reads LGMQ. Catalysis depends on residues His-516 and Glu-518.

This sequence belongs to the CTP synthase family. As to quaternary structure, homotetramer.

It catalyses the reaction UTP + L-glutamine + ATP + H2O = CTP + L-glutamate + ADP + phosphate + 2 H(+). It carries out the reaction L-glutamine + H2O = L-glutamate + NH4(+). The enzyme catalyses UTP + NH4(+) + ATP = CTP + ADP + phosphate + 2 H(+). The protein operates within pyrimidine metabolism; CTP biosynthesis via de novo pathway; CTP from UDP: step 2/2. With respect to regulation, allosterically activated by GTP, when glutamine is the substrate; GTP has no effect on the reaction when ammonia is the substrate. The allosteric effector GTP functions by stabilizing the protein conformation that binds the tetrahedral intermediate(s) formed during glutamine hydrolysis. Inhibited by the product CTP, via allosteric rather than competitive inhibition. Functionally, catalyzes the ATP-dependent amination of UTP to CTP with either L-glutamine or ammonia as the source of nitrogen. Regulates intracellular CTP levels through interactions with the four ribonucleotide triphosphates. The polypeptide is CTP synthase (Nitrosomonas eutropha (strain DSM 101675 / C91 / Nm57)).